Reading from the N-terminus, the 405-residue chain is Solute carrier family 35 member E2A (405 aa).

Residues 1–22 (MSAAAKSQVPEEAAPGCEEEPK) are disordered. Helical transmembrane passes span 76-96 (LIYL…NKYI), 106-126 (MLGA…IFVP), 142-162 (FIMT…LGLV), 167-187 (VAVS…VIMS), 195-215 (TGLL…LCTA), 219-241 (SFNI…QNVF), 264-284 (AAAV…PVIG), 296-316 (IVLL…TAYA), 326-346 (FSVA…IVFG), and 347-367 (NKIT…VLLY). The disordered stretch occupies residues 380–405 (SLVTATSRNPEDDTEPLVPQDSRQHH).

This sequence belongs to the TPT transporter family. SLC35E subfamily.

Its subcellular location is the membrane. In terms of biological role, putative transporter. The sequence is that of Solute carrier family 35 member E2A (Slc35e2a) from Mus musculus (Mouse).